A 165-amino-acid chain; its full sequence is Neurotrophin-3 (165 aa).

The first 3 residues, 1–3, serve as a signal peptide directing secretion; it reads IQS. The propeptide occupies 4 to 119; the sequence is TSMDQGSLSE…VLTXTSXXXR (116 aa).

This sequence belongs to the NGF-beta family.

It is found in the secreted. Functionally, seems to promote the survival of visceral and proprioceptive sensory neurons. The sequence is that of Neurotrophin-3 (NTF3) from Tropidophis haetianus (Haitian dwarf boa).